The sequence spans 484 residues: Fumarate hydratase class II (484 aa).

The interval 1–22 is disordered; sequence MPSILDLPIGTGATGKRKESDS. Substrate contacts are provided by residues 110–112, 141–144, 151–153, and Thr-199; these read SGT, HPND, and SSN. His-200 serves as the catalytic Proton donor/acceptor. Ser-330 is a catalytic residue. Residues Ser-331 and 336–338 contribute to the substrate site; that span reads KVN.

It belongs to the class-II fumarase/aspartase family. Fumarase subfamily. As to quaternary structure, homotetramer.

It localises to the cytoplasm. The enzyme catalyses (S)-malate = fumarate + H2O. The protein operates within carbohydrate metabolism; tricarboxylic acid cycle; (S)-malate from fumarate: step 1/1. In terms of biological role, involved in the TCA cycle. Catalyzes the stereospecific interconversion of fumarate to L-malate. This chain is Fumarate hydratase class II, found in Methanosarcina acetivorans (strain ATCC 35395 / DSM 2834 / JCM 12185 / C2A).